The following is a 346-amino-acid chain: Quinolinate synthase (346 aa).

Positions 47 and 68 each coordinate iminosuccinate. C113 is a binding site for [4Fe-4S] cluster. Iminosuccinate contacts are provided by residues 139 to 141 (YAN) and S156. C200 contacts [4Fe-4S] cluster. Residues 226 to 228 (HPE) and T243 each bind iminosuccinate. C297 provides a ligand contact to [4Fe-4S] cluster.

The protein belongs to the quinolinate synthase family. Type 1 subfamily. [4Fe-4S] cluster is required as a cofactor.

The protein localises to the cytoplasm. The catalysed reaction is iminosuccinate + dihydroxyacetone phosphate = quinolinate + phosphate + 2 H2O + H(+). Its pathway is cofactor biosynthesis; NAD(+) biosynthesis; quinolinate from iminoaspartate: step 1/1. Functionally, catalyzes the condensation of iminoaspartate with dihydroxyacetone phosphate to form quinolinate. The sequence is that of Quinolinate synthase from Photorhabdus laumondii subsp. laumondii (strain DSM 15139 / CIP 105565 / TT01) (Photorhabdus luminescens subsp. laumondii).